A 125-amino-acid polypeptide reads, in one-letter code: ATP synthase epsilon chain (125 aa).

The protein belongs to the ATPase epsilon chain family. F-type ATPases have 2 components, CF(1) - the catalytic core - and CF(0) - the membrane proton channel. CF(1) has five subunits: alpha(3), beta(3), gamma(1), delta(1), epsilon(1). CF(0) has three main subunits: a, b and c.

Its subcellular location is the cell inner membrane. In terms of biological role, produces ATP from ADP in the presence of a proton gradient across the membrane. The chain is ATP synthase epsilon chain from Aliarcobacter butzleri (strain RM4018) (Arcobacter butzleri).